The sequence spans 158 residues: SsrA-binding protein (158 aa).

Belongs to the SmpB family.

The protein localises to the cytoplasm. In terms of biological role, required for rescue of stalled ribosomes mediated by trans-translation. Binds to transfer-messenger RNA (tmRNA), required for stable association of tmRNA with ribosomes. tmRNA and SmpB together mimic tRNA shape, replacing the anticodon stem-loop with SmpB. tmRNA is encoded by the ssrA gene; the 2 termini fold to resemble tRNA(Ala) and it encodes a 'tag peptide', a short internal open reading frame. During trans-translation Ala-aminoacylated tmRNA acts like a tRNA, entering the A-site of stalled ribosomes, displacing the stalled mRNA. The ribosome then switches to translate the ORF on the tmRNA; the nascent peptide is terminated with the 'tag peptide' encoded by the tmRNA and targeted for degradation. The ribosome is freed to recommence translation, which seems to be the essential function of trans-translation. This Saccharopolyspora erythraea (strain ATCC 11635 / DSM 40517 / JCM 4748 / NBRC 13426 / NCIMB 8594 / NRRL 2338) protein is SsrA-binding protein.